A 208-amino-acid chain; its full sequence is Putative 3-methyladenine DNA glycosylase (208 aa).

This sequence belongs to the DNA glycosylase MPG family.

In Lactobacillus johnsonii (strain CNCM I-12250 / La1 / NCC 533), this protein is Putative 3-methyladenine DNA glycosylase.